The following is a 1372-amino-acid chain: DNA-directed RNA polymerase subunit beta' (1372 aa).

Residues C69, C71, C84, and C87 each coordinate Zn(2+). Mg(2+)-binding residues include D460, D462, and D464. Residues C808, C882, C889, and C892 each contribute to the Zn(2+) site.

Belongs to the RNA polymerase beta' chain family. As to quaternary structure, the RNAP catalytic core consists of 2 alpha, 1 beta, 1 beta' and 1 omega subunit. When a sigma factor is associated with the core the holoenzyme is formed, which can initiate transcription. The cofactor is Mg(2+). Zn(2+) is required as a cofactor.

The enzyme catalyses RNA(n) + a ribonucleoside 5'-triphosphate = RNA(n+1) + diphosphate. DNA-dependent RNA polymerase catalyzes the transcription of DNA into RNA using the four ribonucleoside triphosphates as substrates. This is DNA-directed RNA polymerase subunit beta' from Rickettsia prowazekii (strain Madrid E).